Here is a 492-residue protein sequence, read N- to C-terminus: Transmembrane protein 39B (492 aa).

A disordered region spans residues 1 to 53 (MGGRRGPNRTSYYRNPLCEPGSSGASGGGHSSSASVSSVRSRSRTTSGTGLSS). N8 carries N-linked (GlcNAc...) asparagine glycosylation. The segment covering 31–53 (SSSASVSSVRSRSRTTSGTGLSS) has biased composition (low complexity). 8 consecutive transmembrane segments (helical) span residues 77–97 (SILFELQLFFCQLIALFVHYI), 115–135 (TSLNFHLIDFNLLMVTTIVLG), 153–175 (SLFRSILLFLTRFTVLTATGWSL), 185–205 (TYSFLNLLFLCYPFGMYIPFL), 288–308 (EVLVSSMLSAYYVAFVPVWFV), 322–342 (LFLLVSISTSVILMQHLLPAS), 421–441 (ILNILLLLEGAVIVYQLYSLM), and 447–467 (HQTISLALILFSNYYAFFKLL).

The protein belongs to the TMEM39 family.

It localises to the endoplasmic reticulum membrane. Its function is as follows. May protect the cells against DNA damage caused by exposure to the cold-warming stress and facilitates tissue damage repair during the recovery phase. In Rattus norvegicus (Rat), this protein is Transmembrane protein 39B.